We begin with the raw amino-acid sequence, 284 residues long: Actin-like protein ARP10 (284 aa).

It belongs to the actin family. ARP10 subfamily. In terms of assembly, self-associates. Component of the dynactin complex composed of at least ARP1, JNM1, NIP100 and ARP10. Dynactin comprises a short rod of the ARP1 filament attached to ARP10 at its pointed-end and probably associated with the capping protein at its barbed-end. The rod is implicated in dynein cargo binding. A sidearm formed by NIP100 projects from the ARP1 filament and is implicated in motor binding. Interacts with ARP1 and JNM1.

The protein resides in the cytoplasm. Its subcellular location is the cytoskeleton. In terms of biological role, pointed-end-associated component of the dynactin complex which assists cytoplasmic dynein by increasing its processivity and by regulation of its cargo binding. The dynactin complex is required for the spindle translocation late in anaphase and is involved in a cell wall synthesis checkpoint. May regulate the association of the dynactin complex with the plasma membrane. The chain is Actin-like protein ARP10 (ARP10) from Saccharomyces cerevisiae (strain ATCC 204508 / S288c) (Baker's yeast).